Here is a 1359-residue protein sequence, read N- to C-terminus: MAHVSFKSKEADSMSRWSKYLSTEESPPSASLSWRAMGVDGPQGSASGQKHLQMEPVVQLSKVAEGLLAKMYRLNSILDYPDPNAHTFSEAFWKAGVMPNFPKICITLSKKFPEHPNKLQLEKVDKFALDALNENAEGYMQNLEQWITLLLDLLEFREQALRLILDLSSTVITLLPHQNSLILHAFMDLFCSFVRVNLFSDKIPRKMILQVYNILHIMLKGGRDCEFYHRLVQFVDLYDPPVKGLHEDLNFVSPRIGEVLEAVGPIIFLSTDTKKLRNEGFLSPFHPRYPDILTNSAHPMRAQDLANVTSYREWVLLGYLVCPDELLRVTSIDVAMVVLKENLVLSLFRDEYILLHENYQLYVLPKVLESKRMAKSGRTKQKEADLEYNVAKQVEKMLMEVHEQALVSADALHHERRILLKQEIGRMVLFFTDQPSLLAPNIQMVFSALALAQCEVVWYFQHVGIASSKSSRGRTVDIDAADPTIGFLLDGMGKLCCLVRKYIAAIKGYALSYLSSCAGRIRFLLGTPGMVALDLDATLKGLFQQVLHCLENIPKPQGENVPAITCDLTDLRKHWLSILMIVTSSRSSVNIRHLEKATVSTGKEGLVSEGNAAYNWSRCVDELEGQLSKHGSLKKLYFYHQHLTTVFRNTMFGPEGRPQHCCAWLGAACCFPECASSIIPEEVNKIGRDSISYVESLIESIMGGLEGLINILDSEGGFGSLEMQLSPEQAAIRLNNATRAKAVSGLLAPGHESYPDNSSSVKMLEAAMQRLTSLCSVLNDMEPICVLNHVFILREYMRDCIIGNFRRRFHSMIRTDSCLQRPSVIESLLRRHLSIIHLAEQHISMDLTEGIREVLLAESFTGPFPNLQVFETPTETHGGGSAIDIISNWYIDNFVKDASRTGVVFDASQNCFRSSQPIGGGYLAEAFTDKRELKALVRLFGGYGVDRLDKLLREHTSALLNCIDSALRSNRDALEGLAGSVNSGDRIERDANLKQIIDIETLADFCIQAGQAITFRRLLVEAVGAVLEEKVPLIYSLLKGLAMQLPEEVPDKNEIIRLRRVASSVGVGDKHDAEWVHSILAEIGSANDNSWTLLPYLCAAFMASNMWSTTAYDVNTGGFSNNLHCLARCVSAVVGGSEYTRMEREHRRSSLSNGHMDELQEPELLSRVSAEANIKSAMQLYVKLSAGLVLDSWNDTSRPYIVPKLIFLDQLCEMSPYLPRSTLEVHIPYTILRSIYHQLYGASLMATEPMEPSPRQSPLISLAHASPSMKQNRADTTPRSHTFEPGYHSSSGSQYDEGYEGDRRTGERQLRSMRRSGPLDYTGTRKVKFVEGSSSGSHGAGSGSLQRFAVSRSGPLSYK.

Positions 1267–1359 (PSMKQNRADT…VSRSGPLSYK (93 aa)) are disordered. Composition is skewed to basic and acidic residues over residues 1272 to 1282 (NRADTTPRSHT) and 1300 to 1310 (EGDRRTGERQL).

This sequence belongs to the HEM-1/HEM-2 family. In terms of assembly, binds PIR.

In terms of biological role, involved in regulation of actin and microtubule organization. Part of a WAVE complex that activates the Arp2/3 complex. The protein is Probable protein NAP1 (NAP1) of Oryza sativa subsp. japonica (Rice).